Consider the following 245-residue polypeptide: tRNA pseudouridine synthase A 2 (245 aa).

The active-site Nucleophile is Asp-53. Tyr-111 provides a ligand contact to substrate.

It belongs to the tRNA pseudouridine synthase TruA family. Homodimer.

It catalyses the reaction uridine(38/39/40) in tRNA = pseudouridine(38/39/40) in tRNA. Functionally, formation of pseudouridine at positions 38, 39 and 40 in the anticodon stem and loop of transfer RNAs. In Bacillus anthracis, this protein is tRNA pseudouridine synthase A 2.